A 406-amino-acid chain; its full sequence is Sorting nexin-6 (406 aa).

M1 is subject to N-acetylmethionine. M2 bears the N-acetylmethionine; in Sorting nexin-6, N-terminally processed mark. Positions 2–179 are interaction with PIM1; that stretch reads MEGLDDGPDF…NQDLSVRGKN (178 aa). Residues 26–173 enclose the PX domain; sequence LQSDAALQVD…HVFLEYNQDL (148 aa). Residues 41–47, 100–106, and 114–117 contribute to the a 1,2-diacyl-sn-glycero-3-phospho-(1D-myo-inositol-4,5-bisphosphate) site; these read SERDRVK, FDASREK, and EGSM. Residues S116 and S194 each carry the phosphoserine modification. Residues 182–199 are membrane-binding amphipathic helix; it reads EKLEDFFKNMVKSADGVI. One can recognise a BAR domain in the interval 203 to 406; that stretch reads VKDVDDFFEH…NCLAVLNGDT (204 aa).

The protein belongs to the sorting nexin family. In terms of assembly, forms heterodimers with BAR domain-containing sorting nexins SNX1 and SNX2. The heterodimers are proposed to self-assemble into helical arrays on the membrane to stabilize and expand local membrane curvature underlying endosomal tubule formation. Thought to be a component of the originally described retromer complex (also called SNX-BAR retromer) which is a pentamer containing the heterotrimeric retromer cargo-selective complex (CSC), also described as vacuolar protein sorting subcomplex (VPS), and a heterodimeric membrane-deforming subcomplex formed between SNX1 or SNX2 and SNX5 or SNX6 (also called SNX-BAR subcomplex); the respective CSC and SNX-BAR subcomplexes associate with low affinity. Interacts with SNX1, SNX2, VPS26A, VPS29, VPS35, TGFB receptors, BACE1, BRMS1, PIP5K1C. Interacts with DCTN1; the association with DCTN1 is involved in movement of retromer-c ontaining vesicles toward the TGN. Interacts with PIM1; translocating SNX6 to the nucleus. Interacts with CDKN1B and GIT1. In terms of processing, in vitro phosphorylated by PIM1; not affecting PIM1-dependent nuclear translocation.

The protein resides in the early endosome membrane. It is found in the cytoplasmic vesicle. It localises to the cytoplasm. The protein localises to the nucleus. Functionally, involved in several stages of intracellular trafficking. Interacts with membranes phosphatidylinositol 3,4-bisphosphate and/or phosphatidylinositol 4,5-bisphosphate. Acts in part as component of the retromer membrane-deforming SNX-BAR subcomplex. The SNX-BAR retromer mediates retrograde transport of cargo proteins from endosomes to the trans-Golgi network (TGN) and is involved in endosome-to-plasma membrane transport for cargo protein recycling. The SNX-BAR subcomplex functions to deform the donor membrane into a tubular profile called endosome-to-TGN transport carrier (ETC). Does not have in vitro vesicle-to-membrane remodeling activity. Involved in retrograde endosome-to-TGN transport of lysosomal enzyme receptor IGF2R. May function as link between transport vesicles and dynactin. Negatively regulates retrograde transport of BACE1 from the cell surface to the trans-Golgi network. Involved in E-cadherin sorting and degradation; inhibits PIP5K1C-mediated E-cadherin degradation. In association with GIT1 involved in EGFR degradation. Promotes lysosomal degradation of CDKN1B. May contribute to transcription regulation. The polypeptide is Sorting nexin-6 (Snx6) (Mus musculus (Mouse)).